A 552-amino-acid polypeptide reads, in one-letter code: MSLHLSQDFALKASAAVAVLLLAAWVRLRRRIQSKISNIPGPKPTSLLGNYSQLHSAEKGWEFFDEIHAKYGNVCRISTPVGCNDIIYLADPLALNHMNRRDEAKFDDPHEIHIMLQMVLGNKGLGATSGAEHHRQRKFLNPVFGPSYLRHMPPLFYEVTHRFLDAMRILCADGQREIDMSHWGTRVSLEFVGKGAIGFELDSLAIDSKPNLYGEEMKQGFVALSTPAARLAMKYFLPRIASLRTPKFNRWLLNLVPSPLVTIVKNFVWELDANSRTMFQQKKEALLKGGDALSEQSSKGKDLMTALIREHVLVDRADKVDEEEATSHFRTLLFAATDTSSSAILRTIQLLAEHPDVQTRLREEINTAKADADGDLSYEKLLALPLLDAVYRETLRLYPPASYIDRVAHEDVVLPLAFPITGVDGTQMSELVVPKGTVVTMSIVGVNRSTAIWGPDALVWNPDRWLAPLPETVKSSKMPGITSSIMTFLDGKRHCLGYRYVQMELKILISEIVCTLAFAPTEKHAKIEWPMGLTLSPFVDGKMSMPLKVSLA.

The helical transmembrane segment at 9-26 (FALKASAAVAVLLLAAWV) threads the bilayer. Asparagine 50 and asparagine 447 each carry an N-linked (GlcNAc...) asparagine glycan. Position 495 (cysteine 495) interacts with heme.

Belongs to the cytochrome P450 family. The cofactor is heme.

It localises to the membrane. The enzyme catalyses (-)-cyatha-3,12-diene + reduced [NADPH--hemoprotein reductase] + O2 = erinacol + oxidized [NADPH--hemoprotein reductase] + H2O + H(+). The protein operates within secondary metabolite biosynthesis. Cytochrome P450 monooxygenase; part of the gene cluster that mediates the biosynthesis of erinacines, cyathane-xylosides that show unique biological activities, including leishmanicidal activity, stimulating activity for nerve growth-factor synthesis, and agonistic activity toward the kappa opioid receptor. Within the pathway, eriI hydroxylates cyatha-3,12-diene at C-14 of the seven-membered ring to yield erinacol. The first step of the erinacines biosynthesis pathway is catalyzed by the geranylgeranyl diphosphate (GGPP) synthase eriE via conversion of farnesyl pyrophosphate and isopentyl pyrophosphate into geranylgeranyl pyrophosphate (GGPP). GGPP is then substrate of the diterpene cyclase eriG for the production of cyatha-3,12-diene. The cytochrome P450 monooxygenase eriI then hydroxylates cyatha-3,12-diene at C-14 of the seven-membered ring to produce erinacol, which is further hydroxylated at C-15 by the cytochrome P450 monooxygenase eriC to yield cyathadiol. The cytochrome P450 monooxygenase eriA then catalyzes C-11 hydroxylation in the presence of the short chain dehydrogenase/reductase (SDR) eriH, which leads to the production of cyathatriol. The acetyltransferase eriL converts cyathatriol into 11-O-acetyl-cyathatriol. The SDR eriH catalyzes further oxidation of 11-O-acetyl-cyathatriol into 1-O-acetylcyathin A3. Finally, the glycosyl transferase eriJ tranfers xylose from UDP-xylose onto C-14 of 11-O-acetyl-cyathatriol to form eracine Q. EriJ is also able to convert 11-O-acetyl-cyathatriol to eracine Q2 by using UDP-D-glucose as cosubstrate, but at a lower rate. In terms of biological role, cytochrome P450 monooxygenase; part of the gene cluster that mediates the biosynthesis of erinacines, cyathane-xylosides that show unique biological activities, including leishmanicidal activity, stimulating activity for nerve growth-factor synthesis, and agonistic activity toward the kappa opioid receptor. The geranylgeranyl diphosphate (GGPP) synthase eriE catalyzes the first step in erinacines biosynthesis via conversion of farnesyl pyrophosphate and isopentyl pyrophosphate into geranylgeranyl pyrophosphate (GGPP). GGPP is then substrate of the diterpene cyclase eriG for the production of cyatha-3,12-diene. EriG is unable to use geranyl diphosphate (GPP) or farnesyl diphosphate (FPP) as substrates. The cytochrome P450 monooxygenase eriI then hydroxylates cyatha-3,12-diene at C-14 of the seven-membered ring to produce erinacol, which is further hydroxylated at C-15 by the cytochrome P450 monooxygenase eriC to yield cyathadiol. The cytochrome P450 monooxygenase eriA then catalyzes C-11 hydroxylation in the presence of the short chain dehydrogenase/reductase (SDR) eriH, which leads to the production of cyathatriol. The acetyltransferase eriL converts cyathatriol into 11-O-acetyl-cyathatriol. The SDR eriH catalyzes further oxidation of 11-O-acetyl-cyathatriol into 1-O-acetylcyathin A3. Finally, the glycosyl transferase eriJ tranfers xylose from UDP-xylose onto C-14 of 11-O-acetyl-cyathatriol to form eracine Q. EriJ is also able to convert 11-O-acetyl-cyathatriol to eracine Q2 by using UDP-D-glucose as cosubstrate, but at a lower rate. In the absence of eriL and eriJ, the SDR eriH is able to convert cyathatriol to cyathin A3; this is likely a switching mechanism in the biosynthesis of cyathins (C-14 ketogroup)and erinacines (C-14 glycosylated group). The roles of the SDR eriB, the polyprenyl transferase eriF and the dehydrogenase eriK have still to be identified. The chain is Cytochrome P450 monooxyhenase eriI from Hericium erinaceus (Lion's mane mushroom).